The primary structure comprises 641 residues: Mannosyl-oligosaccharide 1,2-alpha-mannosidase IB (641 aa).

Residue T2 is modified to N-acetylthreonine. The Cytoplasmic portion of the chain corresponds to 2–36 (TTPALLPLSGRRIPPLNLGPPSFPHHRATLRLSEK). Residues 37-57 (FILLLILSAFITLCFGAFFFL) form a helical; Signal-anchor for type II membrane protein membrane-spanning segment. The Lumenal segment spans residues 58–641 (PDSSKHKRFD…TTLSGNPAVR (584 aa)). Residues 153–175 (NKPLPPVPIPNLVGIRGGDPEDN) form a disordered region. Residues C462 and C494 are joined by a disulfide bond. E508 acts as the Proton donor in catalysis. Position 619 (T619) interacts with Ca(2+). N631 is a glycosylation site (N-linked (GlcNAc...) asparagine).

It belongs to the glycosyl hydrolase 47 family. Ca(2+) serves as cofactor. Highest levels of expression in placenta and testis.

The protein localises to the golgi apparatus membrane. It carries out the reaction N(4)-(alpha-D-Man-(1-&gt;2)-alpha-D-Man-(1-&gt;2)-alpha-D-Man-(1-&gt;3)-[alpha-D-Man-(1-&gt;2)-alpha-D-Man-(1-&gt;3)-[alpha-D-Man-(1-&gt;2)-alpha-D-Man-(1-&gt;6)]-alpha-D-Man-(1-&gt;6)]-beta-D-Man-(1-&gt;4)-beta-D-GlcNAc-(1-&gt;4)-beta-D-GlcNAc)-L-asparaginyl-[protein] (N-glucan mannose isomer 9A1,2,3B1,2,3) + 4 H2O = N(4)-(alpha-D-Man-(1-&gt;3)-[alpha-D-Man-(1-&gt;3)-[alpha-D-Man-(1-&gt;6)]-alpha-D-Man-(1-&gt;6)]-beta-D-Man-(1-&gt;4)-beta-D-GlcNAc-(1-&gt;4)-beta-D-GlcNAc)-L-asparaginyl-[protein] (N-glucan mannose isomer 5A1,2) + 4 beta-D-mannose. It catalyses the reaction N(4)-(alpha-D-Man-(1-&gt;2)-alpha-D-Man-(1-&gt;2)-alpha-D-Man-(1-&gt;3)-[alpha-D-Man-(1-&gt;3)-[alpha-D-Man-(1-&gt;2)-alpha-D-Man-(1-&gt;6)]-alpha-D-Man-(1-&gt;6)]-beta-D-Man-(1-&gt;4)-beta-D-GlcNAc-(1-&gt;4)-beta-D-GlcNAc)-L-asparaginyl-[protein] (N-glucan mannose isomer 8A1,2,3B1,3) + 3 H2O = N(4)-(alpha-D-Man-(1-&gt;3)-[alpha-D-Man-(1-&gt;3)-[alpha-D-Man-(1-&gt;6)]-alpha-D-Man-(1-&gt;6)]-beta-D-Man-(1-&gt;4)-beta-D-GlcNAc-(1-&gt;4)-beta-D-GlcNAc)-L-asparaginyl-[protein] (N-glucan mannose isomer 5A1,2) + 3 beta-D-mannose. Its pathway is protein modification; protein glycosylation. With respect to regulation, inhibited by both 1-deoxymannojirimycin and kifunensine. Functionally, involved in the maturation of Asn-linked oligosaccharides. Progressively trim alpha-1,2-linked mannose residues from Man(9)GlcNAc(2) to produce Man(5)GlcNAc(2). The chain is Mannosyl-oligosaccharide 1,2-alpha-mannosidase IB (MAN1A2) from Homo sapiens (Human).